We begin with the raw amino-acid sequence, 263 residues long: 4-hydroxy-tetrahydrodipicolinate reductase (263 aa).

NAD(+)-binding positions include 8–13, D34, 99–101, and 125–128; these read GACGRM, GTT, and SPNY. The active-site Proton donor/acceptor is H157. H158 is a (S)-2,3,4,5-tetrahydrodipicolinate binding site. K161 serves as the catalytic Proton donor. (S)-2,3,4,5-tetrahydrodipicolinate is bound at residue 167 to 168; the sequence is GT.

Belongs to the DapB family.

It localises to the cytoplasm. The enzyme catalyses (S)-2,3,4,5-tetrahydrodipicolinate + NAD(+) + H2O = (2S,4S)-4-hydroxy-2,3,4,5-tetrahydrodipicolinate + NADH + H(+). It catalyses the reaction (S)-2,3,4,5-tetrahydrodipicolinate + NADP(+) + H2O = (2S,4S)-4-hydroxy-2,3,4,5-tetrahydrodipicolinate + NADPH + H(+). Its pathway is amino-acid biosynthesis; L-lysine biosynthesis via DAP pathway; (S)-tetrahydrodipicolinate from L-aspartate: step 4/4. Its function is as follows. Catalyzes the conversion of 4-hydroxy-tetrahydrodipicolinate (HTPA) to tetrahydrodipicolinate. In Methanosarcina acetivorans (strain ATCC 35395 / DSM 2834 / JCM 12185 / C2A), this protein is 4-hydroxy-tetrahydrodipicolinate reductase.